A 426-amino-acid chain; its full sequence is Cephalotocin receptor 2 (426 aa).

The Extracellular segment spans residues 1–51; it reads MYQAMEVESTSPSGFFLDFYTQSTIPTTDFLNNTNSSHPIRDEKLVKIEIA. 2 N-linked (GlcNAc...) asparagine glycosylation sites follow: Asn32 and Asn35. The helical transmembrane segment at 52 to 72 threads the bilayer; it reads VLGTCFTLAIINNLCVLLVLL. Topologically, residues 73-84 are cytoplasmic; it reads WRRKKVRRMQMF. The helical transmembrane segment at 85–105 threads the bilayer; it reads ILHLSIADLIVAFFNILPQLI. The Extracellular portion of the chain corresponds to 106 to 120; that stretch reads WDITFRFMAGDAMCR. The cysteines at positions 119 and 198 are disulfide-linked. The chain crosses the membrane as a helical span at residues 121–141; that stretch reads FIKYAQMFSLYLSTYILIMTA. At 142 to 165 the chain is on the cytoplasmic side; the sequence is VDRYRAICHPLSNQTWTPCMVYCK. Residues 166–186 form a helical membrane-spanning segment; that stretch reads IFIAYAIATIFSIPQAILFQM. At 187–208 the chain is on the extracellular side; sequence QEVNEGSGIYDCWVHFEPAWVL. Residues 209 to 229 form a helical membrane-spanning segment; that stretch reads TAYALYIFFALYLIPILILFF. The Cytoplasmic segment spans residues 230-288; sequence TYGSICYTIWAKYRHAIKTKKDANTRYPQRRKKKGVILRTHSVHGFSKAKLNSVKLTFA. A helical membrane pass occupies residues 289 to 309; the sequence is VIVTYIICWSPFFVSQIWWLF. The Extracellular segment spans residues 310–319; that stretch reads DETVVGNAGV. The chain crosses the membrane as a helical span at residues 320 to 340; the sequence is VVILLMACLNSCTNPWIYLIF. Over 341 to 426 the chain is Cytoplasmic; sequence NRNYISNVLP…DQFIYSDKTT (86 aa). The tract at residues 373–426 is disordered; sequence GSVRRDSRKTSDPKRISESRRISDARRISGKTQKNNSSSPRKTSDQFIYSDKTT. The span at 375–399 shows a compositional bias: basic and acidic residues; sequence VRRDSRKTSDPKRISESRRISDARR. The span at 402 to 426 shows a compositional bias: polar residues; that stretch reads GKTQKNNSSSPRKTSDQFIYSDKTT.

Belongs to the G-protein coupled receptor 1 family. Vasopressin/oxytocin receptor subfamily. As to expression, present in various peripheral tissues with highest expression in branchia and vas deferens. Very low expression detected in nervous system.

The protein resides in the cell membrane. Its function is as follows. Acts as a receptor for cephalotocin. This is Cephalotocin receptor 2 from Octopus vulgaris (Common octopus).